The primary structure comprises 439 residues: GTPase Der (439 aa).

2 EngA-type G domains span residues P2–G167 and I182–H358. GTP is bound by residues G8 to S15, D55 to I59, N118 to E121, G188 to S195, D235 to L239, and N301 to D304. The KH-like domain occupies Y359–H439.

The protein belongs to the TRAFAC class TrmE-Era-EngA-EngB-Septin-like GTPase superfamily. EngA (Der) GTPase family. In terms of assembly, associates with the 50S ribosomal subunit.

GTPase that plays an essential role in the late steps of ribosome biogenesis. The protein is GTPase Der of Thermosipho africanus (strain TCF52B).